Reading from the N-terminus, the 304-residue chain is Small glutamine-rich tetratricopeptide repeat-containing protein beta (304 aa).

4 TPR repeats span residues 15 to 49, 85 to 118, 120 to 152, and 153 to 186; these read LREQ…SPED, ADQL…DPNN, VYYC…DSKY, and SKAY…DPEN. An N6-acetyllysine modification is found at Lys131. Phosphoserine occurs at positions 293, 295, and 297.

This sequence belongs to the SGT family. As to quaternary structure, homooligomerize.

Functionally, co-chaperone that binds directly to HSC70 and HSP70 and regulates their ATPase activity. The protein is Small glutamine-rich tetratricopeptide repeat-containing protein beta (Sgtb) of Mus musculus (Mouse).